The following is a 463-amino-acid chain: mRNA-capping enzyme subunit alpha (463 aa).

Catalysis depends on Lys-66, which acts as the N6-GMP-lysine intermediate. Positions Trp-404–Glu-463 are disordered. A compositionally biased stretch (acidic residues) spans Asp-441–Asp-455.

It belongs to the eukaryotic GTase family. As to quaternary structure, heterodimer. The mRNA-capping enzyme is composed of two separate chains alpha and beta, respectively a mRNA guanylyltransferase and an mRNA 5'-triphosphate monophosphatase.

Its subcellular location is the nucleus. The enzyme catalyses a 5'-end diphospho-ribonucleoside in mRNA + GTP + H(+) = a 5'-end (5'-triphosphoguanosine)-ribonucleoside in mRNA + diphosphate. Functionally, second step of mRNA capping. Transfer of the GMP moiety of GTP to the 5'-end of RNA via an enzyme-GMP covalent reaction intermediate. This is mRNA-capping enzyme subunit alpha (CEG1) from Eremothecium gossypii (strain ATCC 10895 / CBS 109.51 / FGSC 9923 / NRRL Y-1056) (Yeast).